The primary structure comprises 134 residues: MLSPKRTKYRRYHRGRMKGKAMRGNKLTYGDFALQSLEPGWLTSRQIEAGRRVLTRYVRRTGKLWIRIFPDKPITMRPADTRMGKGKGAPEFWVAVVKPGTMIYEITGVTEPIARSAMRITAYKMPVKTQFVAR.

Belongs to the universal ribosomal protein uL16 family. Part of the 50S ribosomal subunit.

The protein localises to the plastid. The protein resides in the chloroplast. In Oltmannsiellopsis viridis (Marine flagellate), this protein is Large ribosomal subunit protein uL16c.